The following is a 120-amino-acid chain: Large ribosomal subunit protein uL14 (120 aa).

The protein belongs to the universal ribosomal protein uL14 family. As to quaternary structure, part of the 50S ribosomal subunit. Forms a cluster with proteins L3 and L19. In the 70S ribosome, L14 and L19 interact and together make contacts with the 16S rRNA in bridges B5 and B8.

Binds to 23S rRNA. Forms part of two intersubunit bridges in the 70S ribosome. The polypeptide is Large ribosomal subunit protein uL14 (Dictyoglomus turgidum (strain DSM 6724 / Z-1310)).